The sequence spans 290 residues: Endoplasmic reticulum-Golgi intermediate compartment protein 1 (290 aa).

At 1 to 26 (MPFDFRRFDIYRKVPKDLTQPTYTGA) the chain is on the cytoplasmic side. Residues 27–47 (IISICCCLFILFLFLSELTGF) form a helical membrane-spanning segment. Residues 48-254 (ITTEVVNELY…RRQPLYRFIT (207 aa)) lie on the Lumenal side of the membrane. Asn74 carries N-linked (GlcNAc...) asparagine glycosylation. A helical transmembrane segment spans residues 255 to 275 (TICAIIGGTFTVAGILDSCIF). Residues 276-290 (TASEAWKKIQLGKMH) are Cytoplasmic-facing.

It belongs to the ERGIC family. In terms of assembly, may form a heteromeric complex composed of ERGIC1, ERGIC2 and ERGIC3. Within the complex, the interaction with ERGIC3 is direct. Interacts with ERGIC3/ERV46. N-glycosylated.

It is found in the endoplasmic reticulum membrane. The protein localises to the endoplasmic reticulum-Golgi intermediate compartment membrane. Its subcellular location is the golgi apparatus membrane. Functionally, possible role in transport between endoplasmic reticulum and Golgi. The polypeptide is Endoplasmic reticulum-Golgi intermediate compartment protein 1 (ERGIC1) (Homo sapiens (Human)).